We begin with the raw amino-acid sequence, 654 residues long: Fructose-1,6-bisphosphatase class 3 (654 aa).

This sequence belongs to the FBPase class 3 family. Mn(2+) is required as a cofactor.

The catalysed reaction is beta-D-fructose 1,6-bisphosphate + H2O = beta-D-fructose 6-phosphate + phosphate. The protein operates within carbohydrate biosynthesis; gluconeogenesis. In Staphylococcus epidermidis (strain ATCC 35984 / DSM 28319 / BCRC 17069 / CCUG 31568 / BM 3577 / RP62A), this protein is Fructose-1,6-bisphosphatase class 3.